Here is a 469-residue protein sequence, read N- to C-terminus: A-type ATP synthase subunit B 3 (469 aa).

Belongs to the ATPase alpha/beta chains family. In terms of assembly, has multiple subunits with at least A(3), B(3), C, D, E, F, H, I and proteolipid K(x).

It is found in the cell membrane. Component of the A-type ATP synthase that produces ATP from ADP in the presence of a proton gradient across the membrane. The B chain is a regulatory subunit. The polypeptide is A-type ATP synthase subunit B 3 (Methanospirillum hungatei JF-1 (strain ATCC 27890 / DSM 864 / NBRC 100397 / JF-1)).